Consider the following 118-residue polypeptide: uncharacterized protein (118 aa).

The protein to M.jannaschii MJ0310 and MJ1340.

This is an uncharacterized protein from Methanocaldococcus jannaschii (strain ATCC 43067 / DSM 2661 / JAL-1 / JCM 10045 / NBRC 100440) (Methanococcus jannaschii).